Reading from the N-terminus, the 201-residue chain is Small ribosomal subunit protein uS4c (201 aa).

Residues 89-149 enclose the S4 RNA-binding domain; that stretch reads MRLDNILFRL…DKPKSGALIK (61 aa).

The protein belongs to the universal ribosomal protein uS4 family. As to quaternary structure, part of the 30S ribosomal subunit. Contacts protein S5. The interaction surface between S4 and S5 is involved in control of translational fidelity.

Its subcellular location is the plastid. In terms of biological role, one of the primary rRNA binding proteins, it binds directly to 16S rRNA where it nucleates assembly of the body of the 30S subunit. With S5 and S12 plays an important role in translational accuracy. This is Small ribosomal subunit protein uS4c (rps4) from Cuscuta reflexa (Southern Asian dodder).